The chain runs to 986 residues: Probable ATP-dependent RNA helicase ddx42 (986 aa).

Disordered stretches follow at residues 1–149, 165–192, and 206–252; these read MSKR…DEDD, AAID…DIDN, and QLAN…IEPL. Residues 29–82 show a composition bias toward low complexity; that stretch reads SNINNNNNSNNNNNNNNNNNNNNNNNNNKNNIGTGINLNIKNNNNINNNNNKSG. Polar residues predominate over residues 105-117; that stretch reads PPKSSMTTLNKSP. The span at 119–137 shows a compositional bias: low complexity; sequence NFENASSNNNNNNNNNNQE. The segment covering 217 to 236 has biased composition (acidic residues); that stretch reads DDDVDYSSLDDDDGYFDDEE. The short motif at 305 to 333 is the Q motif element; sequence TSFGHYGFDDILLQAIAKQSIETPTPIQK. A Helicase ATP-binding domain is found at 336-511; it reads IPIALSGRDL…RTILSDPIKI (176 aa). 349 to 356 contributes to the ATP binding site; sequence AKTGSGKT. The DEAD box signature appears at 459-462; sequence DEAD. In terms of domain architecture, Helicase C-terminal spans 522–684; it reads DITQIVQVLK…FVPPELIDVA (163 aa). The tract at residues 688 to 986 is disordered; that stretch reads PHFKRERGGG…FNQRSQYNRR (299 aa). Residues 696-723 are compositionally biased toward gly residues; sequence GGGGGSNRGRGRGGGGVGYRRNSRGGGV. Low complexity-rich tracts occupy residues 753 to 764 and 771 to 978; these read NPNNTDNSEINN and NNEN…NNFN.

It belongs to the DEAD box helicase family. DDX42 subfamily.

The protein localises to the nucleus. The catalysed reaction is ATP + H2O = ADP + phosphate + H(+). Its function is as follows. probable ATP-dependent RNA helicase which may bind to partially double-stranded RNAs (dsRNAs) in order to unwind RNA secondary structures. The chain is Probable ATP-dependent RNA helicase ddx42 (ddx42) from Dictyostelium discoideum (Social amoeba).